The sequence spans 360 residues: DNA replication and repair protein RecF (360 aa).

Residue Gly33–Thr40 coordinates ATP.

This sequence belongs to the RecF family.

Its subcellular location is the cytoplasm. Functionally, the RecF protein is involved in DNA metabolism; it is required for DNA replication and normal SOS inducibility. RecF binds preferentially to single-stranded, linear DNA. It also seems to bind ATP. In Rickettsia akari (strain Hartford), this protein is DNA replication and repair protein RecF.